The following is a 180-amino-acid chain: Probable DNA-directed RNA polymerase subunit delta (180 aa).

In terms of domain architecture, HTH HARE-type spans 14 to 81; that stretch reads LSMIEVARAI…GHNVWALRSW (68 aa). Positions 89–180 are disordered; the sequence is EEVNHPEDEE…HQDDLDDDDE (92 aa). Acidic residues predominate over residues 115-163; sequence DSDDDDIIDYDSDDPEDEDLDVDEEDTNEDDYSDDDLDDADDNELDDGI.

Belongs to the RpoE family. RNAP is composed of a core of 2 alpha, a beta and a beta' subunits. The core is associated with a delta subunit and one of several sigma factors.

In terms of biological role, participates in both the initiation and recycling phases of transcription. In the presence of the delta subunit, RNAP displays an increased specificity of transcription, a decreased affinity for nucleic acids, and an increased efficiency of RNA synthesis because of enhanced recycling. The polypeptide is Probable DNA-directed RNA polymerase subunit delta (Lactobacillus johnsonii (strain CNCM I-12250 / La1 / NCC 533)).